A 236-amino-acid chain; its full sequence is Glucosamine-6-phosphate deaminase (236 aa).

The active-site Proton acceptor; for enolization step is Asp62. Asn128 acts as the For ring-opening step in catalysis. His130 (proton acceptor; for ring-opening step) is an active-site residue. The active-site For ring-opening step is the Glu135.

This sequence belongs to the glucosamine/galactosamine-6-phosphate isomerase family. NagB subfamily.

The enzyme catalyses alpha-D-glucosamine 6-phosphate + H2O = beta-D-fructose 6-phosphate + NH4(+). The protein operates within amino-sugar metabolism; N-acetylneuraminate degradation; D-fructose 6-phosphate from N-acetylneuraminate: step 5/5. Its function is as follows. Catalyzes the reversible isomerization-deamination of glucosamine 6-phosphate (GlcN6P) to form fructose 6-phosphate (Fru6P) and ammonium ion. In Lacticaseibacillus paracasei (strain ATCC 334 / BCRC 17002 / CCUG 31169 / CIP 107868 / KCTC 3260 / NRRL B-441) (Lactobacillus paracasei), this protein is Glucosamine-6-phosphate deaminase.